A 609-amino-acid chain; its full sequence is UvrABC system protein C (609 aa).

The GIY-YIG domain occupies 15-92 (TGSGVYQMQD…IKQFRPRYNV (78 aa)). The 36-residue stretch at 202–237 (DQVIIKLTERMEVASENLVFEEAAHYRDQIRQLRRL) folds into the UVR domain.

It belongs to the UvrC family. Interacts with UvrB in an incision complex.

The protein localises to the cytoplasm. The UvrABC repair system catalyzes the recognition and processing of DNA lesions. UvrC both incises the 5' and 3' sides of the lesion. The N-terminal half is responsible for the 3' incision and the C-terminal half is responsible for the 5' incision. The protein is UvrABC system protein C of Coxiella burnetii (strain RSA 331 / Henzerling II).